The primary structure comprises 134 residues: Small ribosomal subunit protein bS6 (134 aa).

The interval 99-134 (EPSAMMQKRDRDERKDRERGRRRDEDGFSGDRNEEN) is disordered. Positions 105-134 (QKRDRDERKDRERGRRRDEDGFSGDRNEEN) are enriched in basic and acidic residues.

The protein belongs to the bacterial ribosomal protein bS6 family.

Functionally, binds together with bS18 to 16S ribosomal RNA. This chain is Small ribosomal subunit protein bS6, found in Methylobacterium nodulans (strain LMG 21967 / CNCM I-2342 / ORS 2060).